We begin with the raw amino-acid sequence, 465 residues long: UDP-N-acetylmuramate--L-alanine ligase (465 aa).

An ATP-binding site is contributed by 112 to 118 (GTHGKTT).

It belongs to the MurCDEF family.

It localises to the cytoplasm. The enzyme catalyses UDP-N-acetyl-alpha-D-muramate + L-alanine + ATP = UDP-N-acetyl-alpha-D-muramoyl-L-alanine + ADP + phosphate + H(+). It participates in cell wall biogenesis; peptidoglycan biosynthesis. Cell wall formation. The protein is UDP-N-acetylmuramate--L-alanine ligase of Janthinobacterium sp. (strain Marseille) (Minibacterium massiliensis).